A 350-amino-acid polypeptide reads, in one-letter code: Protein RecA (350 aa).

ATP is bound at residue 67–74 (GPESSGKT).

This sequence belongs to the RecA family.

The protein localises to the cytoplasm. In terms of biological role, can catalyze the hydrolysis of ATP in the presence of single-stranded DNA, the ATP-dependent uptake of single-stranded DNA by duplex DNA, and the ATP-dependent hybridization of homologous single-stranded DNAs. It interacts with LexA causing its activation and leading to its autocatalytic cleavage. This is Protein RecA from Wolinella succinogenes (strain ATCC 29543 / DSM 1740 / CCUG 13145 / JCM 31913 / LMG 7466 / NCTC 11488 / FDC 602W) (Vibrio succinogenes).